Consider the following 241-residue polypeptide: DnaJ homolog subfamily C member 4 (241 aa).

The 66-residue stretch at Thr-34–Leu-99 folds into the J domain. The segment covering Arg-88–Leu-99 has biased composition (basic and acidic residues). Residues Arg-88 to Ala-129 form a disordered region. Polar residues predominate over residues Gln-119 to Ala-129. Residues Val-156–Phe-175 form a helical membrane-spanning segment. The segment at Gln-212–Pro-241 is disordered.

It localises to the membrane. The chain is DnaJ homolog subfamily C member 4 (DNAJC4) from Homo sapiens (Human).